Here is a 347-residue protein sequence, read N- to C-terminus: Holliday junction branch migration complex subunit RuvB (347 aa).

A large ATPase domain (RuvB-L) region spans residues 13–195; sequence NEDAVTSGEV…FGIVEHMQYY (183 aa). ATP-binding positions include Leu-34, Arg-35, Gly-76, Lys-79, Thr-80, Thr-81, 142–144, Arg-185, Tyr-195, and Arg-232; that span reads EDY. Thr-80 contributes to the Mg(2+) binding site. A small ATPAse domain (RuvB-S) region spans residues 196-266; sequence TIDELEKIVQ…TTEGALKQLQ (71 aa). Positions 269–347 are head domain (RuvB-H); sequence DEGLDQTDRR…QLGLPVPGDK (79 aa). Arg-329 contributes to the DNA binding site.

Belongs to the RuvB family. In terms of assembly, homohexamer. Forms an RuvA(8)-RuvB(12)-Holliday junction (HJ) complex. HJ DNA is sandwiched between 2 RuvA tetramers; dsDNA enters through RuvA and exits via RuvB. An RuvB hexamer assembles on each DNA strand where it exits the tetramer. Each RuvB hexamer is contacted by two RuvA subunits (via domain III) on 2 adjacent RuvB subunits; this complex drives branch migration. In the full resolvosome a probable DNA-RuvA(4)-RuvB(12)-RuvC(2) complex forms which resolves the HJ.

Its subcellular location is the cytoplasm. The enzyme catalyses ATP + H2O = ADP + phosphate + H(+). Its function is as follows. The RuvA-RuvB-RuvC complex processes Holliday junction (HJ) DNA during genetic recombination and DNA repair, while the RuvA-RuvB complex plays an important role in the rescue of blocked DNA replication forks via replication fork reversal (RFR). RuvA specifically binds to HJ cruciform DNA, conferring on it an open structure. The RuvB hexamer acts as an ATP-dependent pump, pulling dsDNA into and through the RuvAB complex. RuvB forms 2 homohexamers on either side of HJ DNA bound by 1 or 2 RuvA tetramers; 4 subunits per hexamer contact DNA at a time. Coordinated motions by a converter formed by DNA-disengaged RuvB subunits stimulates ATP hydrolysis and nucleotide exchange. Immobilization of the converter enables RuvB to convert the ATP-contained energy into a lever motion, pulling 2 nucleotides of DNA out of the RuvA tetramer per ATP hydrolyzed, thus driving DNA branch migration. The RuvB motors rotate together with the DNA substrate, which together with the progressing nucleotide cycle form the mechanistic basis for DNA recombination by continuous HJ branch migration. Branch migration allows RuvC to scan DNA until it finds its consensus sequence, where it cleaves and resolves cruciform DNA. This Lactobacillus helveticus (strain DPC 4571) protein is Holliday junction branch migration complex subunit RuvB.